A 79-amino-acid polypeptide reads, in one-letter code: ATP synthase subunit c (79 aa).

Transmembrane regions (helical) follow at residues 11-31 (IAVA…IGIL) and 59-79 (LVDA…FAVI).

This sequence belongs to the ATPase C chain family. As to quaternary structure, F-type ATPases have 2 components, F(1) - the catalytic core - and F(0) - the membrane proton channel. F(1) has five subunits: alpha(3), beta(3), gamma(1), delta(1), epsilon(1). F(0) has three main subunits: a(1), b(2) and c(10-14). The alpha and beta chains form an alternating ring which encloses part of the gamma chain. F(1) is attached to F(0) by a central stalk formed by the gamma and epsilon chains, while a peripheral stalk is formed by the delta and b chains.

It localises to the cell membrane. Its function is as follows. F(1)F(0) ATP synthase produces ATP from ADP in the presence of a proton or sodium gradient. F-type ATPases consist of two structural domains, F(1) containing the extramembraneous catalytic core and F(0) containing the membrane proton channel, linked together by a central stalk and a peripheral stalk. During catalysis, ATP synthesis in the catalytic domain of F(1) is coupled via a rotary mechanism of the central stalk subunits to proton translocation. Functionally, key component of the F(0) channel; it plays a direct role in translocation across the membrane. A homomeric c-ring of between 10-14 subunits forms the central stalk rotor element with the F(1) delta and epsilon subunits. In Buchnera aphidicola subsp. Baizongia pistaciae (strain Bp), this protein is ATP synthase subunit c.